Consider the following 81-residue polypeptide: Cytotoxin (81 aa).

Residues 1-21 (MKTLLLTTVVVTIVCLDLEYT) form the signal peptide. 4 cysteine pairs are disulfide-bonded: Cys24/Cys42, Cys35/Cys59, Cys63/Cys74, and Cys75/Cys80.

The protein belongs to the three-finger toxin family. Short-chain subfamily. Type IA cytotoxin sub-subfamily. In terms of assembly, monomer in solution; Homodimer and oligomer in the presence of negatively charged lipids forming a pore with a size ranging between 20 and 30 Angstroms. In terms of tissue distribution, expressed by the venom gland.

The protein localises to the secreted. It is found in the target cell membrane. Functionally, shows cytolytic activity on many different cells by forming pore in lipid membranes. In vivo, increases heart rate or kills the animal by cardiac arrest. In addition, it binds to heparin with high affinity, interacts with Kv channel-interacting protein 1 (KCNIP1) in a calcium-independent manner, and binds to integrin alpha-V/beta-3 (ITGAV/ITGB3) with moderate affinity. This chain is Cytotoxin, found in Naja sputatrix (Malayan spitting cobra).